A 430-amino-acid chain; its full sequence is Ribosomal protein uS12 methylthiotransferase RimO (430 aa).

One can recognise an MTTase N-terminal domain in the interval 1 to 116 (MRVGIKVLGC…IANAIENGTD (116 aa)). Residues C10, C46, C79, C148, C152, and C155 each coordinate [4Fe-4S] cluster. Positions 134-365 (LEERPYAYVK…LLQAEISNSR (232 aa)) constitute a Radical SAM core domain. One can recognise a TRAM domain in the interval 367-430 (DRFVGKKLKF…DEYDMWGSVI (64 aa)).

This sequence belongs to the methylthiotransferase family. RimO subfamily. Monomer. The cofactor is [4Fe-4S] cluster.

It is found in the cytoplasm. The enzyme catalyses L-aspartate(89)-[ribosomal protein uS12]-hydrogen + (sulfur carrier)-SH + AH2 + 2 S-adenosyl-L-methionine = 3-methylsulfanyl-L-aspartate(89)-[ribosomal protein uS12]-hydrogen + (sulfur carrier)-H + 5'-deoxyadenosine + L-methionine + A + S-adenosyl-L-homocysteine + 2 H(+). Its function is as follows. Catalyzes the methylthiolation of an aspartic acid residue of ribosomal protein uS12. This Thermotoga maritima (strain ATCC 43589 / DSM 3109 / JCM 10099 / NBRC 100826 / MSB8) protein is Ribosomal protein uS12 methylthiotransferase RimO.